A 319-amino-acid polypeptide reads, in one-letter code: Insulin gene enhancer protein ISL-2 (319 aa).

LIM zinc-binding domains lie at 1-43 (FLLR…CKRD) and 52-106 (CAQC…RADH). Disordered stretches follow at residues 106–151 (HGPP…EKTT), 218–237 (QQHSDKTSLQGLTGTPLVAG), and 286–319 (ESGSLGTSSGSDVTSLSSQLPDTPNSMVPSPAET). The segment at residues 150–209 (TTRVRTVLNEKQLHTLRTCYAANPRPDALMKEQLVEMTGLSPRVIRVWFQNKRCKDKKKS) is a DNA-binding region (homeobox). Positions 218–230 (QQHSDKTSLQGLT) are enriched in polar residues. Low complexity predominate over residues 286–303 (ESGSLGTSSGSDVTSLSS). Residues 304–319 (QLPDTPNSMVPSPAET) are compositionally biased toward polar residues.

The protein localises to the nucleus. Its function is as follows. Transcriptional factor that defines subclasses of motoneurons that segregate into columns in the spinal cord and select distinct axon pathways. Acts in conjunction with LIM-1, LIM-3 and ISL-1. This chain is Insulin gene enhancer protein ISL-2 (ISL2), found in Gallus gallus (Chicken).